The sequence spans 355 residues: Mannonate dehydratase (355 aa).

The protein belongs to the mannonate dehydratase family. Fe(2+) serves as cofactor. Mn(2+) is required as a cofactor.

The catalysed reaction is D-mannonate = 2-dehydro-3-deoxy-D-gluconate + H2O. Its pathway is carbohydrate metabolism; pentose and glucuronate interconversion. In terms of biological role, catalyzes the dehydration of D-mannonate. In Brachyspira hyodysenteriae (strain ATCC 49526 / WA1), this protein is Mannonate dehydratase.